The sequence spans 336 residues: tRNA N6-adenosine threonylcarbamoyltransferase (336 aa).

His-114 and His-118 together coordinate Fe cation. Substrate is bound by residues 136-140, Asp-169, Gly-182, Asp-186, and Asn-275; that span reads LVSGG. Residue Asp-302 participates in Fe cation binding.

The protein belongs to the KAE1 / TsaD family. It depends on Fe(2+) as a cofactor.

Its subcellular location is the cytoplasm. It catalyses the reaction L-threonylcarbamoyladenylate + adenosine(37) in tRNA = N(6)-L-threonylcarbamoyladenosine(37) in tRNA + AMP + H(+). Required for the formation of a threonylcarbamoyl group on adenosine at position 37 (t(6)A37) in tRNAs that read codons beginning with adenine. Is involved in the transfer of the threonylcarbamoyl moiety of threonylcarbamoyl-AMP (TC-AMP) to the N6 group of A37, together with TsaE and TsaB. TsaD likely plays a direct catalytic role in this reaction. The polypeptide is tRNA N6-adenosine threonylcarbamoyltransferase (Streptococcus agalactiae serotype V (strain ATCC BAA-611 / 2603 V/R)).